The following is a 41-amino-acid chain: Large ribosomal subunit protein bL36 (41 aa).

Belongs to the bacterial ribosomal protein bL36 family.

The chain is Large ribosomal subunit protein bL36 from Novosphingobium aromaticivorans (strain ATCC 700278 / DSM 12444 / CCUG 56034 / CIP 105152 / NBRC 16084 / F199).